Consider the following 88-residue polypeptide: Large ribosomal subunit protein bL27 (88 aa).

Belongs to the bacterial ribosomal protein bL27 family.

The chain is Large ribosomal subunit protein bL27 from Mycobacterium leprae (strain TN).